Reading from the N-terminus, the 1198-residue chain is Regulator of G-protein signaling 3 (1198 aa).

The region spanning 137-256 (GAGQLRLSID…TPDKEISGWY (120 aa)) is the C2 domain. The PDZ domain occupies 299 to 376 (KITIPRGKDG…EIILLVWRMV (78 aa)). Omega-N-methylarginine is present on Arg448. Residues 669–933 (QQLAASPPDS…GAEGGLSLRV (265 aa)) form a disordered region. Residue Ser674 is modified to Phosphoserine. Basic and acidic residues predominate over residues 679-697 (KMFETEADEKREMALEEGK). A compositionally biased stretch (polar residues) spans 739–751 (EPLSSKDSATSEG). Residues 753-773 (PPGPDAPPSKDVPPCQEPPPA) show a composition bias toward pro residues. Positions 877-906 (GDEEDAEEAEEVEEGEEGEEDEDEDTSDDN) are enriched in acidic residues. Residues 907–917 (YGERSEAKRSS) show a composition bias toward basic and acidic residues. Residues Ser943, Ser946, Ser978, and Ser1007 each carry the phosphoserine modification. Disordered regions lie at residues 1007–1026 (SGAD…KSKN) and 1032–1056 (KNKL…ADKM). Residues 1073–1198 (SLEKLLVHKY…INQKKMSPPL (126 aa)) enclose the RGS domain.

Binds EFNB1 and EFNB2. Binds the GNB1-GNG2 heterodimer. In terms of processing, phosphorylated by cyclic GMP-dependent protein kinase. ISGylated.

It localises to the cytoplasm. The protein resides in the nucleus. It is found in the cell membrane. In terms of biological role, down-regulates signaling from heterotrimeric G-proteins by increasing the GTPase activity of the alpha subunits, thereby driving them into their inactive GDP-bound form. Down-regulates G-protein-mediated release of inositol phosphates and activation of MAP kinases. In Homo sapiens (Human), this protein is Regulator of G-protein signaling 3 (RGS3).